A 101-amino-acid chain; its full sequence is Thiosulfate sulfurtransferase GlpE (101 aa).

The Rhodanese domain maps to 17-101 (EAKSVQIVDI…GFSAWHEANA (85 aa)). Cys65 (cysteine persulfide intermediate) is an active-site residue.

Belongs to the GlpE family.

It localises to the cytoplasm. The enzyme catalyses thiosulfate + hydrogen cyanide = thiocyanate + sulfite + 2 H(+). The catalysed reaction is thiosulfate + [thioredoxin]-dithiol = [thioredoxin]-disulfide + hydrogen sulfide + sulfite + 2 H(+). Functionally, transferase that catalyzes the transfer of sulfur from thiosulfate to thiophilic acceptors such as cyanide or dithiols. May function in a CysM-independent thiosulfate assimilation pathway by catalyzing the conversion of thiosulfate to sulfite, which can then be used for L-cysteine biosynthesis. The protein is Thiosulfate sulfurtransferase GlpE of Shewanella oneidensis (strain ATCC 700550 / JCM 31522 / CIP 106686 / LMG 19005 / NCIMB 14063 / MR-1).